A 322-amino-acid polypeptide reads, in one-letter code: Protein farnesyltransferase/geranylgeranyltransferase type-1 subunit alpha (322 aa).

The tract at residues 1-27 (MSSSEEDDGYVPFSKRPEWSDVKPLAQ) is disordered. 6 PFTA repeats span residues 62–95 (RVLD…EQDE), 103–136 (QEMN…IGSD), 138–171 (KEKE…RDWN), 173–205 (ELAM…NPSP), 213–246 (REVE…KIST), and 287–321 (NSLN…LKLI).

It belongs to the protein prenyltransferase subunit alpha family. As to quaternary structure, heterodimer of fntA and fntB (farnesyltransferase). Heterodimer of an alpha and a beta subunit. Mg(2+) is required as a cofactor.

It carries out the reaction L-cysteinyl-[protein] + (2E,6E)-farnesyl diphosphate = S-(2E,6E)-farnesyl-L-cysteinyl-[protein] + diphosphate. The enzyme catalyses geranylgeranyl diphosphate + L-cysteinyl-[protein] = S-geranylgeranyl-L-cysteinyl-[protein] + diphosphate. In terms of biological role, catalyzes the transfer of a farnesyl or geranyl-geranyl moiety from farnesyl or geranyl-geranyl diphosphate to a cysteine at the fourth position from the C-terminus of several proteins having the C-terminal sequence Cys-aliphatic-aliphatic-X. The alpha subunit is thought to participate in a stable complex with the substrate. The beta subunit binds the peptide substrate. This is Protein farnesyltransferase/geranylgeranyltransferase type-1 subunit alpha (fntA) from Dictyostelium discoideum (Social amoeba).